The chain runs to 469 residues: Sulfate adenylyltransferase subunit 1 (469 aa).

A tr-type G domain is found at 22-236 (KDMLRVLTCG…LLNTVSVEQD (215 aa)). The segment at 31–38 (GSVDDGKS) is G1. Residue 31-38 (GSVDDGKS) coordinates GTP. The G2 stretch occupies residues 89–93 (GITID). Residues 110–113 (DTPG) form a G3 region. Residues 110–114 (DTPGH) and 165–168 (NKMD) contribute to the GTP site. Residues 165–168 (NKMD) form a G4 region. The interval 202-204 (SAL) is G5.

The protein belongs to the TRAFAC class translation factor GTPase superfamily. Classic translation factor GTPase family. CysN/NodQ subfamily. In terms of assembly, heterodimer composed of CysD, the smaller subunit, and CysN.

The catalysed reaction is sulfate + ATP + H(+) = adenosine 5'-phosphosulfate + diphosphate. It functions in the pathway sulfur metabolism; hydrogen sulfide biosynthesis; sulfite from sulfate: step 1/3. Functionally, with CysD forms the ATP sulfurylase (ATPS) that catalyzes the adenylation of sulfate producing adenosine 5'-phosphosulfate (APS) and diphosphate, the first enzymatic step in sulfur assimilation pathway. APS synthesis involves the formation of a high-energy phosphoric-sulfuric acid anhydride bond driven by GTP hydrolysis by CysN coupled to ATP hydrolysis by CysD. The protein is Sulfate adenylyltransferase subunit 1 of Shewanella woodyi (strain ATCC 51908 / MS32).